A 377-amino-acid polypeptide reads, in one-letter code: 5-hydroxytryptamine receptor 1D (377 aa).

Residues Asn-5, Asn-17, and Asn-21 are each glycosylated (N-linked (GlcNAc...) asparagine). The next 3 helical transmembrane spans lie at 39 to 64 (ISLAVVLSIITVATVLSNTFVLTTIL), 76 to 97 (LIGSLATTDLLVSILVMPISIA), and 110 to 134 (LCDIWVSSDITCCTASILHLCVIAL). A disulfide bridge links Cys-111 with Cys-188. Residues Asp-118 and Cys-122 each contribute to the serotonin site. The DRY motif; important for ligand-induced conformation changes signature appears at 135 to 137 (DRY). A run of 4 helical transmembrane segments spans residues 155–176 (AAAMIAVVWAISICISIPPLFW), 195–218 (ISYTIYSTCGAFYIPSVLLIVLYG), 301–326 (KTLGIILGAFIGCWLPFFVASLVLPI), and 336–359 (GLFDFFTWLGYLNSLINPIIYTVF). Residue Ser-321 coordinates serotonin. An NPxxY motif; important for ligand-induced conformation changes and signaling motif is present at residues 352 to 356 (NPIIY).

It belongs to the G-protein coupled receptor 1 family. As to quaternary structure, homodimer. Heterodimer with HTR1B.

Its subcellular location is the cell membrane. G-protein coupled receptor for 5-hydroxytryptamine (serotonin). Also functions as a receptor for ergot alkaloid derivatives, various anxiolytic and antidepressant drugs and other psychoactive substances. Ligand binding causes a conformation change that triggers signaling via guanine nucleotide-binding proteins (G proteins) and modulates the activity of downstream effectors, such as adenylate cyclase. HTR1D is coupled to G(i)/G(o) G alpha proteins and mediates inhibitory neurotransmission by inhibiting adenylate cyclase activity. Regulates the release of 5-hydroxytryptamine in the brain, and thereby affects neural activity. May also play a role in regulating the release of other neurotransmitters. May play a role in vasoconstriction. This Oryctolagus cuniculus (Rabbit) protein is 5-hydroxytryptamine receptor 1D (HTR1D).